The primary structure comprises 525 residues: Putative ribose/galactose/methyl galactoside import ATP-binding protein (525 aa).

Residues 1–15 (MFGSATANPPAQRNL) are compositionally biased toward polar residues. The interval 1-23 (MFGSATANPPAQRNLPSGDGDGG) is disordered. 2 consecutive ABC transporter domains span residues 33–269 (LEIS…VGRE) and 279–523 (KPAG…SGHK). Residue 65–72 (GENGAGKS) participates in ATP binding.

Belongs to the ABC transporter superfamily. Carbohydrate importer 2 (CUT2) (TC 3.A.1.2) family.

Its subcellular location is the cell inner membrane. It catalyses the reaction D-ribose(out) + ATP + H2O = D-ribose(in) + ADP + phosphate + H(+). The catalysed reaction is D-galactose(out) + ATP + H2O = D-galactose(in) + ADP + phosphate + H(+). Part of an ABC transporter complex involved in carbohydrate import. Could be involved in ribose, galactose and/or methyl galactoside import. Responsible for energy coupling to the transport system. In Pseudomonas syringae pv. syringae (strain B728a), this protein is Putative ribose/galactose/methyl galactoside import ATP-binding protein.